A 207-amino-acid chain; its full sequence is MSKLKIDTKRRFSLLIALVLIISLSSCATTQTNVTTKTVFNQETTYHNLLKLKKWQANGVIGIIYDNQAESANYTYLQDGDNFSIKLYGPLGIGSIEIKGDTNSVLLANSKGQKLTAKDAKTLMLEQLGWYVPVEGLKYWIKAIAIPNIRQTSELNTNNLLSKLSQNGWSISYSNYQLVDSKYPLPTKIRMSRDNLTLKIVIKSWQI.

An N-terminal signal peptide occupies residues 1–26 (MSKLKIDTKRRFSLLIALVLIISLSS). Residue Cys27 is the site of N-palmitoyl cysteine attachment. Cys27 carries S-diacylglycerol cysteine lipidation.

The protein belongs to the LolB family. Monomer.

It localises to the cell outer membrane. In terms of biological role, plays a critical role in the incorporation of lipoproteins in the outer membrane after they are released by the LolA protein. This is Outer-membrane lipoprotein LolB from Francisella tularensis subsp. tularensis (strain FSC 198).